Here is a 189-residue protein sequence, read N- to C-terminus: Peptidyl-tRNA hydrolase (189 aa).

Tyr-15 lines the tRNA pocket. The Proton acceptor role is filled by His-20. Positions 66, 68, and 114 each coordinate tRNA.

It belongs to the PTH family. Monomer.

The protein resides in the cytoplasm. The catalysed reaction is an N-acyl-L-alpha-aminoacyl-tRNA + H2O = an N-acyl-L-amino acid + a tRNA + H(+). In terms of biological role, hydrolyzes ribosome-free peptidyl-tRNAs (with 1 or more amino acids incorporated), which drop off the ribosome during protein synthesis, or as a result of ribosome stalling. Catalyzes the release of premature peptidyl moieties from peptidyl-tRNA molecules trapped in stalled 50S ribosomal subunits, and thus maintains levels of free tRNAs and 50S ribosomes. The chain is Peptidyl-tRNA hydrolase from Streptococcus pyogenes serotype M1.